The sequence spans 200 residues: uncharacterized protein (200 aa).

An N-terminal signal peptide occupies residues 1-24 (MAIDKLPLLLFLSILLCLNRPVLS). N44, N72, N99, N124, and N135 each carry an N-linked (GlcNAc...) asparagine glycan. S174 carries GPI-anchor amidated serine lipidation. Positions 175–200 (NGFTFGIGLVSYLVIFMYSSFCFFLF) are cleaved as a propeptide — removed in mature form.

It belongs to the UPF0277 family.

Its subcellular location is the cell membrane. This is an uncharacterized protein from Arabidopsis thaliana (Mouse-ear cress).